The sequence spans 61 residues: Large ribosomal subunit protein uL30 (61 aa).

It belongs to the universal ribosomal protein uL30 family. As to quaternary structure, part of the 50S ribosomal subunit.

The protein is Large ribosomal subunit protein uL30 of Neisseria gonorrhoeae (strain ATCC 700825 / FA 1090).